Consider the following 444-residue polypeptide: Tubulin beta-7 chain (444 aa).

Residues glutamine 11, glutamate 69, serine 138, glycine 142, threonine 143, glycine 144, asparagine 204, and asparagine 226 each contribute to the GTP site. Glutamate 69 provides a ligand contact to Mg(2+).

This sequence belongs to the tubulin family. Dimer of alpha and beta chains. A typical microtubule is a hollow water-filled tube with an outer diameter of 25 nm and an inner diameter of 15 nM. Alpha-beta heterodimers associate head-to-tail to form protofilaments running lengthwise along the microtubule wall with the beta-tubulin subunit facing the microtubule plus end conferring a structural polarity. Microtubules usually have 13 protofilaments but different protofilament numbers can be found in some organisms and specialized cells. Requires Mg(2+) as cofactor. As to expression, expressed in roots, leaf sheaths, and suspension cultured cells.

The protein resides in the cytoplasm. The protein localises to the cytoskeleton. In terms of biological role, tubulin is the major constituent of microtubules, a cylinder consisting of laterally associated linear protofilaments composed of alpha- and beta-tubulin heterodimers. Microtubules grow by the addition of GTP-tubulin dimers to the microtubule end, where a stabilizing cap forms. Below the cap, tubulin dimers are in GDP-bound state, owing to GTPase activity of alpha-tubulin. This is Tubulin beta-7 chain (TUBB7) from Oryza sativa subsp. japonica (Rice).